We begin with the raw amino-acid sequence, 651 residues long: Nucleolin (651 aa).

Residues 1 to 11 are compositionally biased toward low complexity; it reads MVKLAKGAKTQ. Residues 1–230 form a disordered region; it reads MVKLAKGAKT…AKKTKTDTAS (230 aa). The segment covering 26–45 has biased composition (acidic residues); sequence EDSEEEEDMEEDDSSDEEVE. Residues 54–79 show a composition bias toward low complexity; sequence KKTATPAKATPGKAATPGKKGATPAK. A compositionally biased stretch (acidic residues) spans 89-101; sequence SEEEEDDSDEEAE. Basic residues predominate over residues 106–116; that stretch reads IKNKPVAKKAV. Composition is skewed to acidic residues over residues 122–134, 155–168, and 183–204; these read SEED…ESEE, SEEE…DEPM, and AEED…EEEQ. Serine 155 carries the phosphoserine modification. Residues 219 to 228 show a composition bias toward basic and acidic residues; that stretch reads PEAKKTKTDT. 4 RRM domains span residues 233-309, 325-399, 415-488, and 503-578; these read LSIF…KAMA, RTLF…FTGE, KVLV…FSQG, and KTLF…FAKP. Residues 574–651 are disordered; sequence DFAKPKGDSQ…GQGKKMRFDD (78 aa). The segment covering 585-644 has biased composition (gly residues); it reads GGRGGFGRGGGFRGGRGGRGGGGGRGFGGRGGGRGRGGFGGRGGGGFRGGQGGGFRGGQG.

It localises to the nucleus. It is found in the nucleolus. In terms of biological role, nucleolin is the major nucleolar protein of growing eukaryotic cells. It is found associated with intranucleolar chromatin and pre-ribosomal particles. It induces chromatin decondensation by binding to histone H1. It is thought to play a role in pre-rRNA transcription and ribosome assembly. In Xenopus laevis (African clawed frog), this protein is Nucleolin (ncl).